Here is a 533-residue protein sequence, read N- to C-terminus: Hydroxylamine reductase (533 aa).

4 residues coordinate [4Fe-4S] cluster: Cys3, Cys6, Cys15, and Cys21. Residues His234, Glu258, Cys302, Cys389, Cys417, Cys442, Glu476, and Lys478 each coordinate hybrid [4Fe-2O-2S] cluster. Cys389 bears the Cysteine persulfide mark.

The protein belongs to the HCP family. [4Fe-4S] cluster is required as a cofactor. The cofactor is hybrid [4Fe-2O-2S] cluster.

Its subcellular location is the cytoplasm. The enzyme catalyses A + NH4(+) + H2O = hydroxylamine + AH2 + H(+). Its function is as follows. Catalyzes the reduction of hydroxylamine to form NH(3) and H(2)O. This is Hydroxylamine reductase from Maridesulfovibrio salexigens (strain ATCC 14822 / DSM 2638 / NCIMB 8403 / VKM B-1763) (Desulfovibrio salexigens).